Reading from the N-terminus, the 180-residue chain is Type-1 fimbrial protein, C chain (180 aa).

A signal peptide spans 1–23 (MKLKFISMAVFSALTLGVATNAS). Cysteines 44 and 84 form a disulfide.

The protein belongs to the fimbrial protein family.

It is found in the fimbrium. Its function is as follows. Fimbriae (also called pili), polar filaments radiating from the surface of the bacterium to a length of 0.5-1.5 micrometers and numbering 100-300 per cell, enable bacteria to colonize the epithelium of specific host organs. The chain is Type-1 fimbrial protein, C chain (pilC) from Escherichia coli O6:H1 (strain CFT073 / ATCC 700928 / UPEC).